Here is a 147-residue protein sequence, read N- to C-terminus: Putative pre-16S rRNA nuclease (147 aa).

The protein belongs to the YqgF nuclease family.

The protein localises to the cytoplasm. In terms of biological role, could be a nuclease involved in processing of the 5'-end of pre-16S rRNA. This Latilactobacillus sakei subsp. sakei (strain 23K) (Lactobacillus sakei subsp. sakei) protein is Putative pre-16S rRNA nuclease.